The primary structure comprises 527 residues: Bifunctional purine biosynthesis protein PurH (527 aa).

The 148-residue stretch at 9-156 (NAKRPIRRAL…KNHPSVAVVV (148 aa)) folds into the MGS-like domain.

It belongs to the PurH family.

The catalysed reaction is (6R)-10-formyltetrahydrofolate + 5-amino-1-(5-phospho-beta-D-ribosyl)imidazole-4-carboxamide = 5-formamido-1-(5-phospho-D-ribosyl)imidazole-4-carboxamide + (6S)-5,6,7,8-tetrahydrofolate. The enzyme catalyses IMP + H2O = 5-formamido-1-(5-phospho-D-ribosyl)imidazole-4-carboxamide. Its pathway is purine metabolism; IMP biosynthesis via de novo pathway; 5-formamido-1-(5-phospho-D-ribosyl)imidazole-4-carboxamide from 5-amino-1-(5-phospho-D-ribosyl)imidazole-4-carboxamide (10-formyl THF route): step 1/1. The protein operates within purine metabolism; IMP biosynthesis via de novo pathway; IMP from 5-formamido-1-(5-phospho-D-ribosyl)imidazole-4-carboxamide: step 1/1. This chain is Bifunctional purine biosynthesis protein PurH, found in Mycolicibacterium paratuberculosis (strain ATCC BAA-968 / K-10) (Mycobacterium paratuberculosis).